A 532-amino-acid chain; its full sequence is All-trans-retinyl ester 13-cis isomerohydrolase (532 aa).

Cys112 carries S-palmitoyl cysteine; in membrane form lipidation. Fe cation is bound by residues His180, His241, and His313. Cys329 is lipidated: S-palmitoyl cysteine; in membrane form. His527 is a binding site for Fe cation.

This sequence belongs to the carotenoid oxygenase family. It depends on Fe(2+) as a cofactor. Post-translationally, palmitoylated. As to expression, predominantly expressed in brain. Expressed at a low level in the eye.

The protein localises to the cytoplasm. Its subcellular location is the cell membrane. It carries out the reaction an all-trans-retinyl ester + H2O = 13-cis-retinol + a fatty acid + H(+). The enzyme catalyses lutein = (3R,3'S)-zeaxanthin. Its function is as follows. Specifically generates 13-cis retinol, a stereoisomeric form of retinoic acid. Capable of catalyzing the isomerization of lutein to meso-zeaxanthin an eye-specific carotenoid. This is All-trans-retinyl ester 13-cis isomerohydrolase (rpe65b) from Danio rerio (Zebrafish).